The following is a 324-amino-acid chain: 4-diphosphocytidyl-2-C-methyl-D-erythritol kinase (324 aa).

Lys11 is an active-site residue. Residue 108-118 (PIGAGLAGGST) coordinates ATP. Asp150 is a catalytic residue.

It belongs to the GHMP kinase family. IspE subfamily.

It carries out the reaction 4-CDP-2-C-methyl-D-erythritol + ATP = 4-CDP-2-C-methyl-D-erythritol 2-phosphate + ADP + H(+). The protein operates within isoprenoid biosynthesis; isopentenyl diphosphate biosynthesis via DXP pathway; isopentenyl diphosphate from 1-deoxy-D-xylulose 5-phosphate: step 3/6. Catalyzes the phosphorylation of the position 2 hydroxy group of 4-diphosphocytidyl-2C-methyl-D-erythritol. This is 4-diphosphocytidyl-2-C-methyl-D-erythritol kinase from Cyanothece sp. (strain PCC 7425 / ATCC 29141).